The following is a 309-amino-acid chain: Thiamine-monophosphate kinase (309 aa).

Mg(2+) is bound by residues Asp-41 and Asp-55. His-62 is a substrate binding site. Mg(2+) contacts are provided by Asp-83, Asp-128, and Asp-215. 127–128 provides a ligand contact to ATP; sequence GD. Ser-217 is an ATP binding site. Asp-218 provides a ligand contact to Mg(2+). A substrate-binding site is contributed by Glu-268.

This sequence belongs to the thiamine-monophosphate kinase family.

The catalysed reaction is thiamine phosphate + ATP = thiamine diphosphate + ADP. The protein operates within cofactor biosynthesis; thiamine diphosphate biosynthesis; thiamine diphosphate from thiamine phosphate: step 1/1. In terms of biological role, catalyzes the ATP-dependent phosphorylation of thiamine-monophosphate (TMP) to form thiamine-pyrophosphate (TPP), the active form of vitamin B1. The protein is Thiamine-monophosphate kinase of Methanopyrus kandleri (strain AV19 / DSM 6324 / JCM 9639 / NBRC 100938).